The following is a 199-amino-acid chain: MRLTLQHITRLKVLLHLAGFLPLLWLILSVDQGWFSADPAKDIQHFTGRMALKLLLATLLVTPLARYGKQPLLIRCRRLLGLWCFFWATLHLVSYALLELGLDHLALLGKELISRPYLTLGVISWLILLALAVTSPQIMMRKLGSQWQKLHNFVYLVAILAPIHYLWSVKTLSPQPILYALAALILLLFRYKKFRQWWR.

Transmembrane regions (helical) follow at residues 13 to 33 (VLLH…VDQG), 79 to 99 (LLGL…ALLE), 120 to 140 (LGVI…QIMM), 147 to 167 (WQKL…HYLW), and 169 to 189 (VKTL…LLLF).

Belongs to the MsrQ family. In terms of assembly, heterodimer of a catalytic subunit (MsrP) and a heme-binding subunit (MsrQ). The cofactor is FMN. Requires heme b as cofactor.

It localises to the cell inner membrane. Its function is as follows. Part of the MsrPQ system that repairs oxidized periplasmic proteins containing methionine sulfoxide residues (Met-O), using respiratory chain electrons. Thus protects these proteins from oxidative-stress damage caused by reactive species of oxygen and chlorine generated by the host defense mechanisms. MsrPQ is essential for the maintenance of envelope integrity under bleach stress, rescuing a wide series of structurally unrelated periplasmic proteins from methionine oxidation. MsrQ provides electrons for reduction to the reductase catalytic subunit MsrP, using the quinone pool of the respiratory chain. The chain is Protein-methionine-sulfoxide reductase heme-binding subunit MsrQ from Pectobacterium carotovorum subsp. carotovorum (strain PC1).